A 433-amino-acid polypeptide reads, in one-letter code: GTPase Der (433 aa).

EngA-type G domains lie at 5–167 and 174–349; these read KKVL…GRVN and IKVG…DQLE. GTP is bound by residues 11–18, 58–62, 119–122, 180–187, 227–231, and 292–295; these read GRPNVGKS, DTGGF, NKVD, GKPNSGKS, DTAGI, and SKWD. In terms of domain architecture, KH-like spans 349 to 429; that stretch reads ELKTNTPDLN…PILVELREKI (81 aa).

The protein belongs to the TRAFAC class TrmE-Era-EngA-EngB-Septin-like GTPase superfamily. EngA (Der) GTPase family. Associates with the 50S ribosomal subunit.

Functionally, GTPase that plays an essential role in the late steps of ribosome biogenesis. The sequence is that of GTPase Der from Borrelia garinii subsp. bavariensis (strain ATCC BAA-2496 / DSM 23469 / PBi) (Borreliella bavariensis).